The following is an 807-amino-acid chain: Glycerol-3-phosphate acyltransferase (807 aa).

The HXXXXD motif signature appears at 308–313 (CHRSHM).

This sequence belongs to the GPAT/DAPAT family.

It is found in the cell inner membrane. The enzyme catalyses sn-glycerol 3-phosphate + an acyl-CoA = a 1-acyl-sn-glycero-3-phosphate + CoA. Its pathway is phospholipid metabolism; CDP-diacylglycerol biosynthesis; CDP-diacylglycerol from sn-glycerol 3-phosphate: step 1/3. The chain is Glycerol-3-phosphate acyltransferase from Shewanella baltica (strain OS195).